The chain runs to 312 residues: DNA-directed RNA polymerase subunit alpha (312 aa).

The interval 1–226 (MIEFEKPKIT…DHLNLFVDLS (226 aa)) is alpha N-terminal domain (alpha-NTD). The alpha C-terminal domain (alpha-CTD) stretch occupies residues 243–312 (TERVLDKIIE…ELGLSLKKRK (70 aa)).

Belongs to the RNA polymerase alpha chain family. In terms of assembly, homodimer. The RNAP catalytic core consists of 2 alpha, 1 beta, 1 beta' and 1 omega subunit. When a sigma factor is associated with the core the holoenzyme is formed, which can initiate transcription.

It catalyses the reaction RNA(n) + a ribonucleoside 5'-triphosphate = RNA(n+1) + diphosphate. DNA-dependent RNA polymerase catalyzes the transcription of DNA into RNA using the four ribonucleoside triphosphates as substrates. The sequence is that of DNA-directed RNA polymerase subunit alpha from Lactococcus lactis subsp. lactis (strain IL1403) (Streptococcus lactis).